The primary structure comprises 558 residues: Rhamnogalacturonase B (558 aa).

An N-terminal signal peptide occupies residues 1–21 (MLLDKLSVLSFLGLAPIFAAA). C42 and C68 are oxidised to a cystine. N-linked (GlcNAc...) asparagine glycosylation occurs at N145. The Proton donor role is filled by D219. Residues C221 and C238 are joined by a disulfide bond. N-linked (GlcNAc...) asparagine glycosylation is found at N239 and N254. Residue H294 is part of the active site. The N-linked (GlcNAc...) asparagine glycan is linked to N321. Cystine bridges form between C344–C350 and C372–C381. A compositionally biased stretch (low complexity) spans 503 to 526 (VGAQEGSTTSAPSFAAPSGAGNSP). Residues 503-558 (VGAQEGSTTSAPSFAAPSGAGNSPQGPTGASGFGEKGQQGEQGEQGEQGEQGVCYV) are disordered.

This sequence belongs to the glycosyl hydrolase 28 family.

It localises to the secreted. The enzyme catalyses Endohydrolysis of alpha-D-GalA-(1-&gt;2)-alpha-L-Rha glycosidic bond in the rhamnogalacturonan I backbone with initial inversion of anomeric configuration releasing oligosaccharides with beta-D-GalA at the reducing end.. Functionally, pectinolytic enzymes consist of four classes of enzymes: pectine lyase, polygalacturonase, pectin methylesterase and rhamnogalacturonase. Hydrolyzes alpha-D-galacturonopyranosyl-(1,2)-alpha-L-rhamnopyranosyl linkages in the backbone of the hairy regions of pectins. The chain is Rhamnogalacturonase B (rhgB) from Aspergillus niger.